The following is a 568-amino-acid chain: WW domain-containing protein A (568 aa).

Positions 6–129 constitute a C2 domain; that stretch reads PLNNSNGSNS…TGPISHDVVF (124 aa). Residues 325–359 enclose the WW 1 domain; that stretch reads VKLPDGWESRIDPVSGKVFYLNHNNKTTSWISPLE. Positions 376–461 are disordered; that stretch reads TILDNNNNNN…SRPKKTPATP (86 aa). Residues 380-418 show a composition bias toward low complexity; the sequence is NNNNNNNNNNNNNNNNNNNNNNINNTNNIQQKQQAQQQP. The span at 435–451 shows a compositional bias: basic and acidic residues; the sequence is QKEKEKEKEINAEDYKI. Positions 519–552 constitute a WW 2 domain; the sequence is QGLPNGWEVRQDQFGRVFYVDHINRATTWTRPTV.

In terms of assembly, interacts with calmodulin in the absence of Ca(2+).

Its subcellular location is the nucleus. The protein localises to the nucleolus. The protein resides in the cytoplasm. It is found in the cell cortex. It localises to the cytoskeleton. Involved in regulation of actin cytoskeleton organization and cytokinesis. This Dictyostelium discoideum (Social amoeba) protein is WW domain-containing protein A.